The chain runs to 447 residues: Glycylpeptide N-tetradecanoyltransferase (447 aa).

Residues 38-41 (YKFW), 171-173 (LCV), and 179-183 (SKRLA) contribute to the tetradecanoyl-CoA site. Leucine 447 (proton acceptor; via carboxylate) is an active-site residue.

This sequence belongs to the NMT family. In terms of assembly, monomer.

The protein localises to the cytoplasm. It catalyses the reaction N-terminal glycyl-[protein] + tetradecanoyl-CoA = N-tetradecanoylglycyl-[protein] + CoA + H(+). Functionally, adds a myristoyl group to the N-terminal glycine residue of certain cellular proteins. The polypeptide is Glycylpeptide N-tetradecanoyltransferase (NMT1) (Kluyveromyces lactis (strain ATCC 8585 / CBS 2359 / DSM 70799 / NBRC 1267 / NRRL Y-1140 / WM37) (Yeast)).